The following is a 1729-amino-acid chain: 182 kDa tankyrase-1-binding protein (1729 aa).

Residues 1–12 are compositionally biased toward polar residues; that stretch reads MKVSTLRESSAM. Positions 1–151 are disordered; the sequence is MKVSTLRESS…VRKAPAPFRP (151 aa). Residue Ser14 is modified to Phosphoserine. Residues 46-63 show a composition bias toward low complexity; that stretch reads ALPAKPALPAKPSLLVPV. Basic and acidic residues predominate over residues 117–127; the sequence is TGKEEAGKEEP. Thr131 carries the post-translational modification Phosphothreonine. Residues Ser178, Ser221, and Ser228 each carry the phosphoserine modification. 3 disordered regions span residues 184–450, 484–603, and 657–880; these read GSRL…LAAL, PSGL…ESPL, and ETTQ…SSRD. The tract at residues 210-1572 is acidic; the sequence is DEDGSTLFRG…TEILDSAMYR (1363 aa). Positions 230–245 are enriched in basic and acidic residues; the sequence is AECREEHSKTPEERSL. At Thr239 the chain carries Phosphothreonine. Ser287 and Ser301 each carry phosphoserine. Residues 352–363 show a composition bias toward low complexity; sequence PSPGLPAEGAPE. Residues 364 to 374 are compositionally biased toward pro residues; sequence APRPSSPPPEV. A phosphoserine mark is found at Ser429, Ser435, Ser437, Ser494, and Ser498. Low complexity-rich tracts occupy residues 500 to 512, 524 to 541, and 572 to 583; these read ITEASEAAEAAEA, VSQQGQGAGSAPSGSGSS, and LPTTEGTPGLPL. Position 501 is a phosphothreonine (Thr501). Ser601, Ser672, Ser691, Ser695, Ser712, Ser724, Ser744, Ser762, and Ser806 each carry phosphoserine. The span at 738–753 shows a compositional bias: polar residues; that stretch reads PQPSSFSPSSWCQGAS. The span at 803–812 shows a compositional bias: polar residues; it reads ASSSQDQSKV. The residue at position 833 (Thr833) is a Phosphothreonine. Ser836, Ser851, Ser872, Ser877, Ser882, and Ser893 each carry phosphoserine. Residues 858 to 872 show a composition bias toward basic and acidic residues; sequence RDAELQDQEFGKRDS. Phosphotyrosine is present on Tyr897. The segment at 897–1083 is disordered; the sequence is YASQDANEQG…ADLEDGEMGK (187 aa). Phosphoserine is present on residues Ser899, Ser920, Ser936, and Ser976. Thr979 carries the phosphothreonine modification. Ser983, Ser987, Ser1004, Ser1008, Ser1013, Ser1024, Ser1029, Ser1054, Ser1073, Ser1091, Ser1103, Ser1133, Ser1138, Ser1158, Ser1178, Ser1248, and Ser1253 each carry phosphoserine. Positions 1012–1021 are enriched in basic and acidic residues; it reads GSRDAGRPGE. Over residues 1043 to 1054 the composition is skewed to polar residues; sequence RDQSSWQNSDAS. The tract at residues 1240–1302 is disordered; the sequence is EVGEGGGHSQ…GAVCSPGESK (63 aa). Thr1282 bears the Phosphothreonine mark. Ser1297, Ser1328, Ser1331, Ser1383, and Ser1385 each carry phosphoserine. The interval 1362–1561 is disordered; the sequence is AREHGVGGVS…SPSQDFSFIE (200 aa). Residues 1389 to 1400 show a composition bias toward basic and acidic residues; sequence EARDPLEARELG. Over residues 1406–1419 the composition is skewed to polar residues; the sequence is GPETQGEDYSSSSL. Phosphoserine occurs at positions 1435, 1439, 1450, 1452, 1473, 1476, 1503, and 1506. Residues 1450–1542 are tankyrase-binding; that stretch reads SGSQGLLEEM…SDQGPAQTSR (93 aa). The residue at position 1518 (Thr1518) is a Phosphothreonine. Phosphoserine is present on residues Ser1533, Ser1545, and Ser1558. At Thr1563 the chain carries Phosphothreonine. The disordered stretch occupies residues 1575–1729; sequence ANLGRKRGHR…QALKLKKKKV (155 aa). Over residues 1577–1586 the composition is skewed to basic residues; sequence LGRKRGHRAP. Residues 1602 to 1615 show a composition bias toward basic and acidic residues; that stretch reads SDAHLFQDSTEPRA. Phosphoserine is present on residues Ser1620, Ser1621, and Ser1631. The Nuclear localization signal signature appears at 1629–1635; that stretch reads PQSRRTR. An N6-methyllysine modification is found at Lys1644. A phosphoserine mark is found at Ser1652, Ser1666, and Ser1715. A compositionally biased stretch (basic and acidic residues) spans 1665–1679; sequence RSAEEGELAESKSSQ. The Nuclear localization signal signature appears at 1723-1729; that stretch reads KLKKKKV.

As to quaternary structure, binds to the ANK repeat domain of TNKS1 and TNKS2. In terms of processing, ADP-ribosylated by TNKS1 (in vitro). Detected in testis, ovary, lung, skeletal muscle, heart, prostate and pancreas, and at very low levels in brain and peripheral blood leukocytes.

It is found in the nucleus. The protein localises to the cytoplasm. The protein resides in the cytoskeleton. Its subcellular location is the chromosome. The sequence is that of 182 kDa tankyrase-1-binding protein (TNKS1BP1) from Homo sapiens (Human).